A 224-amino-acid polypeptide reads, in one-letter code: Deoxyribose-phosphate aldolase (224 aa).

D98 acts as the Proton donor/acceptor in catalysis. The Schiff-base intermediate with acetaldehyde role is filled by K159. The active-site Proton donor/acceptor is K189.

This sequence belongs to the DeoC/FbaB aldolase family. DeoC type 1 subfamily.

It localises to the cytoplasm. The enzyme catalyses 2-deoxy-D-ribose 5-phosphate = D-glyceraldehyde 3-phosphate + acetaldehyde. It functions in the pathway carbohydrate degradation; 2-deoxy-D-ribose 1-phosphate degradation; D-glyceraldehyde 3-phosphate and acetaldehyde from 2-deoxy-alpha-D-ribose 1-phosphate: step 2/2. Catalyzes a reversible aldol reaction between acetaldehyde and D-glyceraldehyde 3-phosphate to generate 2-deoxy-D-ribose 5-phosphate. The chain is Deoxyribose-phosphate aldolase from Methanothermobacter thermautotrophicus (strain ATCC 29096 / DSM 1053 / JCM 10044 / NBRC 100330 / Delta H) (Methanobacterium thermoautotrophicum).